The following is a 1018-amino-acid chain: D-2-hydroxyglutarate dehydrogenase (1018 aa).

One can recognise an FAD-binding PCMH-type domain in the interval tyrosine 48 to leucine 281. Residues arginine 402 and histidine 500 each contribute to the (R)-2-hydroxyglutarate site. The 4Fe-4S ferredoxin-type domain occupies phenylalanine 662–arginine 695. The [4Fe-4S] cluster site is built by cysteine 673, cysteine 676, cysteine 679, and cysteine 683.

In the N-terminal section; belongs to the FAD-binding oxidoreductase/transferase type 4 family. Homotetramer. [4Fe-4S] cluster is required as a cofactor. FAD serves as cofactor.

It catalyses the reaction (R)-2-hydroxyglutarate + A = 2-oxoglutarate + AH2. Activity is completely inhibited by the addition of 0.5 mM Mn(2+), Ni(2+), or Co(2+) and partially inhibited by 0.5 mM Zn(2+). Its function is as follows. Catalyzes the oxidation of D-2-hydroxyglutarate (D-2-HGA) to 2-oxoglutarate. Appears to be the only D2HGDH in E.coli, providing the way to recycle D-2-HGA produced during L-serine synthesis by SerA, by converting it back to 2-oxoglutarate. The physiological molecule that functions as the primary electron acceptor during D-2-HGA oxidation by YdiJ in E.coli is unknown. Shows strict substrate specificity towards D-2-HGA, since it has no detectable activity on L-2-hydroxyglutarate, L-malate, D-malate, L-lactate, D-lactate, L-tartrate, D-tartrate, L-glycerate, D-glycerate, glutarate, or pyruvate. This Escherichia coli (strain K12) protein is D-2-hydroxyglutarate dehydrogenase (ydiJ).